A 251-amino-acid polypeptide reads, in one-letter code: MRRVVRYLSVVVAITLMLTAESVSIATAAVPPLQPIPGVASVSPANGAVVGVAHPVVVTFTTPVTDRRAVERSIRISTPHNTTGHFEWVASNVVRWVPHRYWPPHTRVSVGVQELTEGFETGDALIGVASISAHTFTVSRNGEVLRTMPASLGKPSRPTPIGSFHAMSKERTVVMDSRTIGIPLNSSDGYLLTAHYAVRVTWSGVYVHSAPWSVNSQGYANVSHGCINLSPDNAAWYFDAVTVGDPIEVVG.

A signal peptide spans 1–28 (MRRVVRYLSVVVAITLMLTAESVSIATA). A L,D-TPase catalytic domain is found at 125-250 (LIGVASISAH…VTVGDPIEVV (126 aa)). Substrate contacts are provided by residues Y190 and 203 to 204 (SG). H208 serves as the catalytic Proton donor/acceptor. C226 serves as the catalytic Nucleophile. N228 lines the substrate pocket.

Monomer.

It is found in the periplasm. The protein operates within cell wall biogenesis; peptidoglycan biosynthesis. Is irreversibly inactivated by the beta-lactams carbapenems via the formation of a covalent adduct resulting from acylation of the catalytic Cys. Functionally, generates 3-&gt;3 cross-links in peptidoglycan, catalyzing the cleavage of the mDap(3)-D-Ala(4) bond of a tetrapeptide donor stem and the formation of a bond between the carbonyl of mDap(3) of the donor stem and the side chain of mDap(3) of the acceptor stem. Is specific for donor substrates containing a stem tetrapeptide since it cannot use pentapeptide stems. The sequence is that of L,D-transpeptidase 1 (ldtA) from Mycobacterium tuberculosis (strain CDC 1551 / Oshkosh).